The following is a 418-amino-acid chain: Protein FAM53A (418 aa).

2 disordered regions span residues 198–236 (TSPV…FNPR) and 248–269 (ETGN…LSRR). Positions 205–229 (SSASSGFVDSSEGSTSSSTRWNSGG) are enriched in low complexity. Residues 248-265 (ETGNLLPSANSTPTSTPE) show a composition bias toward polar residues. A Nuclear localization signal motif is present at residues 285–293 (KKSRLKRRR).

The protein belongs to the FAM53 family.

The protein localises to the nucleus. Its function is as follows. May play an important role in neural development; the dorsomedial roof of the third ventricle. The chain is Protein FAM53A from Gallus gallus (Chicken).